We begin with the raw amino-acid sequence, 270 residues long: uncharacterized protein (270 aa).

Residues 235–270 (LADSDLEADSDDSESFEFVENPEPSENGSEPTIKND) are disordered. Acidic residues predominate over residues 238–251 (SDLEADSDDSESFE). The segment covering 255–270 (NPEPSENGSEPTIKND) has biased composition (low complexity).

This is an uncharacterized protein from Halorubrum sp. PV6 (HRPV-1).